The sequence spans 192 residues: Protein GrpE (192 aa).

Residues 1–34 (MSSKEQKTPNEQVSEEMENTAEQQVEATQETGEC) are disordered. The span at 20–31 (TAEQQVEATQET) shows a compositional bias: polar residues.

Belongs to the GrpE family. In terms of assembly, homodimer.

The protein resides in the cytoplasm. Its function is as follows. Participates actively in the response to hyperosmotic and heat shock by preventing the aggregation of stress-denatured proteins, in association with DnaK and GrpE. It is the nucleotide exchange factor for DnaK and may function as a thermosensor. Unfolded proteins bind initially to DnaJ; upon interaction with the DnaJ-bound protein, DnaK hydrolyzes its bound ATP, resulting in the formation of a stable complex. GrpE releases ADP from DnaK; ATP binding to DnaK triggers the release of the substrate protein, thus completing the reaction cycle. Several rounds of ATP-dependent interactions between DnaJ, DnaK and GrpE are required for fully efficient folding. The chain is Protein GrpE from Yersinia pseudotuberculosis serotype I (strain IP32953).